The primary structure comprises 249 residues: Orotidine 5'-phosphate decarboxylase (249 aa).

Substrate-binding positions include Asp-18, Lys-40, Asp-67–Thr-76, Thr-127, Arg-188, Gln-197, Gly-217, and Arg-218. Lys-69 serves as the catalytic Proton donor.

The protein belongs to the OMP decarboxylase family. Type 1 subfamily. As to quaternary structure, homodimer.

The enzyme catalyses orotidine 5'-phosphate + H(+) = UMP + CO2. The protein operates within pyrimidine metabolism; UMP biosynthesis via de novo pathway; UMP from orotate: step 2/2. Catalyzes the decarboxylation of orotidine 5'-monophosphate (OMP) to uridine 5'-monophosphate (UMP). This is Orotidine 5'-phosphate decarboxylase from Baumannia cicadellinicola subsp. Homalodisca coagulata.